The following is a 77-amino-acid chain: Acyl carrier protein (77 aa).

Residues 1-76 form the Carrier domain; the sequence is MAVFDEVKDV…DVVNYIDGLK (76 aa). An O-(pantetheine 4'-phosphoryl)serine modification is found at serine 36.

Belongs to the acyl carrier protein (ACP) family. In terms of processing, 4'-phosphopantetheine is transferred from CoA to a specific serine of apo-ACP by AcpS. This modification is essential for activity because fatty acids are bound in thioester linkage to the sulfhydryl of the prosthetic group.

It localises to the cytoplasm. It functions in the pathway lipid metabolism; fatty acid biosynthesis. In terms of biological role, carrier of the growing fatty acid chain in fatty acid biosynthesis. The protein is Acyl carrier protein of Campylobacter fetus subsp. fetus (strain 82-40).